We begin with the raw amino-acid sequence, 299 residues long: Acetylglutamate kinase (299 aa).

Substrate-binding positions include 66 to 67, Arg-88, and Asn-196; that span reads GG.

The protein belongs to the acetylglutamate kinase family. ArgB subfamily.

The protein resides in the cytoplasm. The catalysed reaction is N-acetyl-L-glutamate + ATP = N-acetyl-L-glutamyl 5-phosphate + ADP. It functions in the pathway amino-acid biosynthesis; L-arginine biosynthesis; N(2)-acetyl-L-ornithine from L-glutamate: step 2/4. Functionally, catalyzes the ATP-dependent phosphorylation of N-acetyl-L-glutamate. The polypeptide is Acetylglutamate kinase (Alcanivorax borkumensis (strain ATCC 700651 / DSM 11573 / NCIMB 13689 / SK2)).